The sequence spans 423 residues: Histidine--tRNA ligase (423 aa).

Belongs to the class-II aminoacyl-tRNA synthetase family. Homodimer.

Its subcellular location is the cytoplasm. It catalyses the reaction tRNA(His) + L-histidine + ATP = L-histidyl-tRNA(His) + AMP + diphosphate + H(+). This chain is Histidine--tRNA ligase, found in Bacillus cytotoxicus (strain DSM 22905 / CIP 110041 / 391-98 / NVH 391-98).